Here is a 55-residue protein sequence, read N- to C-terminus: Large ribosomal subunit protein uL30 (55 aa).

It belongs to the universal ribosomal protein uL30 family. As to quaternary structure, part of the 50S ribosomal subunit.

Its function is as follows. Binds the 5S and 23S rRNAs. The sequence is that of Large ribosomal subunit protein uL30 from Deinococcus radiodurans (strain ATCC 13939 / DSM 20539 / JCM 16871 / CCUG 27074 / LMG 4051 / NBRC 15346 / NCIMB 9279 / VKM B-1422 / R1).